We begin with the raw amino-acid sequence, 341 residues long: uncharacterized protein (341 aa).

Helical transmembrane passes span 8 to 28 (LMLTFNEPLYLFLLVIFPLII), 63 to 83 (LMYFFTYSFLYLAAMVMVFAL), 171 to 191 (IYIMDLGNGSALGLGISIALS), and 317 to 337 (EFLVLAFCLLLVYFIFSKIFL). Residues 101 to 305 (DIVIVLDISP…SKKENLERKI (205 aa)) enclose the VWFA domain.

The protein localises to the cell membrane. This is an uncharacterized protein from Borreliella burgdorferi (strain ATCC 35210 / DSM 4680 / CIP 102532 / B31) (Borrelia burgdorferi).